Reading from the N-terminus, the 242-residue chain is tRNA pseudouridine synthase A (242 aa).

Asp51 functions as the Nucleophile in the catalytic mechanism. Tyr107 serves as a coordination point for substrate.

This sequence belongs to the tRNA pseudouridine synthase TruA family. As to quaternary structure, homodimer.

It catalyses the reaction uridine(38/39/40) in tRNA = pseudouridine(38/39/40) in tRNA. Functionally, formation of pseudouridine at positions 38, 39 and 40 in the anticodon stem and loop of transfer RNAs. The polypeptide is tRNA pseudouridine synthase A (Helicobacter pylori (strain Shi470)).